The sequence spans 195 residues: Imidazoleglycerol-phosphate dehydratase (195 aa).

It belongs to the imidazoleglycerol-phosphate dehydratase family.

It is found in the cytoplasm. It carries out the reaction D-erythro-1-(imidazol-4-yl)glycerol 3-phosphate = 3-(imidazol-4-yl)-2-oxopropyl phosphate + H2O. It participates in amino-acid biosynthesis; L-histidine biosynthesis; L-histidine from 5-phospho-alpha-D-ribose 1-diphosphate: step 6/9. In Geobacillus kaustophilus (strain HTA426), this protein is Imidazoleglycerol-phosphate dehydratase.